The following is a 119-amino-acid chain: Ribonuclease P protein component (119 aa).

Belongs to the RnpA family. In terms of assembly, consists of a catalytic RNA component (M1 or rnpB) and a protein subunit.

The enzyme catalyses Endonucleolytic cleavage of RNA, removing 5'-extranucleotides from tRNA precursor.. In terms of biological role, RNaseP catalyzes the removal of the 5'-leader sequence from pre-tRNA to produce the mature 5'-terminus. It can also cleave other RNA substrates such as 4.5S RNA. The protein component plays an auxiliary but essential role in vivo by binding to the 5'-leader sequence and broadening the substrate specificity of the ribozyme. The polypeptide is Ribonuclease P protein component (Clostridium acetobutylicum (strain ATCC 824 / DSM 792 / JCM 1419 / IAM 19013 / LMG 5710 / NBRC 13948 / NRRL B-527 / VKM B-1787 / 2291 / W)).